The primary structure comprises 109 residues: Small ribosomal subunit protein bS20 (109 aa).

The protein belongs to the bacterial ribosomal protein bS20 family.

In terms of biological role, binds directly to 16S ribosomal RNA. This Synechococcus sp. (strain JA-2-3B'a(2-13)) (Cyanobacteria bacterium Yellowstone B-Prime) protein is Small ribosomal subunit protein bS20.